The chain runs to 135 residues: MIIGIGNDTEAISRVGQIVARQTKFMDSILTPAEREQALERKGKHFHEFVAGRFSAKEAFSKATGYGIGEKVHWHDIEILNEPNGRPIMQVKNFRYKTYVAITHSGDFVNTVVIIERLTILERLSLKFFPKRGVL.

Positions 8 and 58 each coordinate Mg(2+).

It belongs to the P-Pant transferase superfamily. AcpS family. Requires Mg(2+) as cofactor.

It is found in the cytoplasm. It catalyses the reaction apo-[ACP] + CoA = holo-[ACP] + adenosine 3',5'-bisphosphate + H(+). Its function is as follows. Transfers the 4'-phosphopantetheine moiety from coenzyme A to a Ser of acyl-carrier-protein. This is Holo-[acyl-carrier-protein] synthase from Leuconostoc citreum (strain KM20).